Reading from the N-terminus, the 611-residue chain is Putative pentatricopeptide repeat-containing protein At1g56570 (611 aa).

PPR repeat units lie at residues 44 to 74 (HHILATNLIVSYFEKGLVEEARSLFDEMPDR), 75 to 109 (DVVAWTAMITGYASSNYNARAWECFHEMVKQGTSP), 110 to 144 (NEFTLSSVLKSCRNMKVLAYGALVHGVVVKLGMEG), 145 to 176 (SLYVDNAMMNMYATCSVTMEAACLIFRDIKVK), 177 to 211 (NDVTWTTLITGFTHLGDGIGGLKMYKQMLLENAEV), 212 to 246 (TPYCITIAVRASASIDSVTTGKQIHASVIKRGFQS), 247 to 281 (NLPVMNSILDLYCRCGYLSEAKHYFHEMEDKDLIT), 282 to 311 (WNTLISELERSDSSEALLMFQRFESQGFVP), 312 to 346 (NCYTFTSLVAACANIAALNCGQQLHGRIFRRGFNK), 347 to 377 (NVELANALIDMYAKCGNIPDSQRVFGEIVDR), 379 to 413 (NLVSWTSMMIGYGSHGYGAEAVELFDKMVSSGIRP), 414 to 444 (DRIVFMAVLSACRHAGLVEKGLKYFNVMESE), and 450 to 480 (DRDIYNCVVDLLGRAGKIGEAYELVERMPFK). Positions 485–561 (TWGAILGACK…EAGMSWILVE (77 aa)) are type E motif. A type E(+) motif region spans residues 562-592 (NQVFSFAVSDKMCPNASSVYSVLGLLIEETR).

It belongs to the PPR family. PCMP-E subfamily.

The sequence is that of Putative pentatricopeptide repeat-containing protein At1g56570 (PCMP-E64) from Arabidopsis thaliana (Mouse-ear cress).